The sequence spans 1125 residues: MADGIPLNPVRKNLRKTAYYDASRPARYQIEDESSNLDEMPLMMSEEAFENDESDYQTLPRARVSQRRRGLGWFLCGGWKVLCSSCCECLVHTCRRKKELKARTVWLGHPEKCEEKYPKNAIKNQKYNIVTFVPGVLYQQFKFFLNLYFLVVACSQFVPSLKIGYLYTYWAPLGFVLAVTMVREAVDEVRRCRRDKEMNSQLYSKLTVRGKVQVKSSDIQVGDLIIVEKNQRIPADMIFLRTSEKTGSCFIRTDQLDGETDWKLRIGVACTQRLPALGDLFSISAYVYVQKPQLDIHSFEGNFTREDCDPPIHESLSIENTLWASTVVASGTVIGVVIYTGKEMRSVMNTSQSKNKVGLLDLELNRLTKALFLAQVVLSVVMVALQGFLGPWFRNLFRFVVLFSYIIPISLRVNLDMGKSAYGWMIMKDENIPGTVVRTSTIPEELGRLVYLLTDKTGTLTQNEMVFKRLHLGTVSYGTDTMDEIQSHIIQSYAQVSSAQSNGSSASSTPSRKPQPPAPKVRKSVSSRIHEAVKAIALCHNVTPVYESRVNGANAEPESTEADQDFSDDNRTYQASSPDEVALVRWTESVGLTLVNRDLTSLQLKTPAGQILTYYILQIFPFTSESKRMGIIVREEATGDITFYMKGADVAMASIVQYNDWLEEECGNMAREGLRTLVVAKKSLTEEQYQDFENRYNQAKLSIHDRNLKVAAVVESLEREMELLCLTGVEDQLQADVRPTLELLRNAGIKIWMLTGDKLETATCIAKSSHLVSRNQDIHVFKPVSNRGEAHLELNAFRRKHDCALVISGDSLEVCLRYYEHEFVELACQCPAVVCCRCSPTQKAQIVRLLQQHTANRTCAIGDGGNDVSMIQAADCGIGIEGKEGKQASLAADFSITQFKHIGRLLMVHGRNSYKRSAALGQFVMHRGMIISTMQAVFSSIFYFASVPLYQGFLMVGYATIYTMFPVFSLVLDQDVKPEMALLYPELYKDLTKGRSLSFKTFLIWVLISIYQGGILMYGALVLFDQEFVHVVAISFTALILTELLMVALTIRTWHWLMVVAQLISLACYLASLAFLNEYFDLSFITTRVFLWKVCVITLVSCLPLYIIKYLKRKFSPPSYSKLSS.

Over 1–131 (MADGIPLNPV…IKNQKYNIVT (131 aa)) the chain is Cytoplasmic. A helical membrane pass occupies residues 132–152 (FVPGVLYQQFKFFLNLYFLVV). The Extracellular portion of the chain corresponds to 153 to 161 (ACSQFVPSL). Residues 162–182 (KIGYLYTYWAPLGFVLAVTMV) traverse the membrane as a helical segment. Residues 183 to 369 (REAVDEVRRC…LDLELNRLTK (187 aa)) are Cytoplasmic-facing. A helical transmembrane segment spans residues 370–390 (ALFLAQVVLSVVMVALQGFLG). Residues 391 to 395 (PWFRN) are Extracellular-facing. A helical membrane pass occupies residues 396–415 (LFRFVVLFSYIIPISLRVNL). The Cytoplasmic portion of the chain corresponds to 416-928 (DMGKSAYGWM…ALGQFVMHRG (513 aa)). Asp455 functions as the 4-aspartylphosphate intermediate in the catalytic mechanism. Residues Asp455, Lys456, and Thr457 each contribute to the ATP site. Asp455 contributes to the Mg(2+) binding site. Mg(2+) is bound at residue Thr457. Residues 500–511 (QSNGSSASSTPS) are compositionally biased toward low complexity. Disordered regions lie at residues 500–525 (QSNG…RKSV) and 552–574 (GANA…RTYQ). Over residues 558–567 (ESTEADQDFS) the composition is skewed to acidic residues. ATP-binding residues include Glu580, Phe622, Lys627, Lys646, Arg675, Thr676, Thr755, Gly756, Asp757, Arg837, and Lys843. Position 863 (Asp863) interacts with Mg(2+). ATP contacts are provided by Asn866 and Asp867. Mg(2+) is bound at residue Asp867. Residues 929-949 (MIISTMQAVFSSIFYFASVPL) traverse the membrane as a helical segment. Residues 950-951 (YQ) lie on the Extracellular side of the membrane. The chain crosses the membrane as a helical span at residues 952-972 (GFLMVGYATIYTMFPVFSLVL). The Cytoplasmic portion of the chain corresponds to 973-1001 (DQDVKPEMALLYPELYKDLTKGRSLSFKT). A helical transmembrane segment spans residues 1002–1022 (FLIWVLISIYQGGILMYGALV). Residues 1023–1030 (LFDQEFVH) are Extracellular-facing. Residues 1031 to 1051 (VVAISFTALILTELLMVALTI) traverse the membrane as a helical segment. At 1052-1055 (RTWH) the chain is on the cytoplasmic side. A helical transmembrane segment spans residues 1056–1076 (WLMVVAQLISLACYLASLAFL). Over 1077–1088 (NEYFDLSFITTR) the chain is Extracellular. A helical membrane pass occupies residues 1089 to 1109 (VFLWKVCVITLVSCLPLYIIK). Topologically, residues 1110–1125 (YLKRKFSPPSYSKLSS) are cytoplasmic.

This sequence belongs to the cation transport ATPase (P-type) (TC 3.A.3) family. Type IV subfamily. Mg(2+) serves as cofactor.

The protein resides in the golgi apparatus. It localises to the trans-Golgi network membrane. It catalyses the reaction ATP + H2O + phospholipidSide 1 = ADP + phosphate + phospholipidSide 2.. This Danio rerio (Zebrafish) protein is Probable phospholipid-transporting ATPase IIB (atp9b).